Consider the following 363-residue polypeptide: Aminomethyltransferase (363 aa).

This sequence belongs to the GcvT family. As to quaternary structure, the glycine cleavage system is composed of four proteins: P, T, L and H.

It catalyses the reaction N(6)-[(R)-S(8)-aminomethyldihydrolipoyl]-L-lysyl-[protein] + (6S)-5,6,7,8-tetrahydrofolate = N(6)-[(R)-dihydrolipoyl]-L-lysyl-[protein] + (6R)-5,10-methylene-5,6,7,8-tetrahydrofolate + NH4(+). Its function is as follows. The glycine cleavage system catalyzes the degradation of glycine. The chain is Aminomethyltransferase from Thioalkalivibrio sulfidiphilus (strain HL-EbGR7).